The following is a 449-amino-acid chain: Glucose-6-phosphate isomerase (449 aa).

E291 acts as the Proton donor in catalysis. Catalysis depends on residues H312 and K426.

The protein belongs to the GPI family.

Its subcellular location is the cytoplasm. The catalysed reaction is alpha-D-glucose 6-phosphate = beta-D-fructose 6-phosphate. Its pathway is carbohydrate biosynthesis; gluconeogenesis. It functions in the pathway carbohydrate degradation; glycolysis; D-glyceraldehyde 3-phosphate and glycerone phosphate from D-glucose: step 2/4. Catalyzes the reversible isomerization of glucose-6-phosphate to fructose-6-phosphate. In Streptococcus pyogenes serotype M2 (strain MGAS10270), this protein is Glucose-6-phosphate isomerase.